Here is a 159-residue protein sequence, read N- to C-terminus: Protein-export protein SecB (159 aa).

Belongs to the SecB family. As to quaternary structure, homotetramer, a dimer of dimers. One homotetramer interacts with 1 SecA dimer.

The protein resides in the cytoplasm. Functionally, one of the proteins required for the normal export of preproteins out of the cell cytoplasm. It is a molecular chaperone that binds to a subset of precursor proteins, maintaining them in a translocation-competent state. It also specifically binds to its receptor SecA. This chain is Protein-export protein SecB, found in Marinomonas sp. (strain MWYL1).